We begin with the raw amino-acid sequence, 757 residues long: MMDQARSAISNLFGGEPLSYTRFSLARQVDGDNSHVEMKLAVDEEENTDNNMKASVRKHRRLNGRLCFGTIAVVIFFLIGFMIGYLGYCKRTEQKDCVRLAETETGNSEIIQEENIPQSSRLYWADLKKLLSEKLDAIEFTDTIKQLSQTSREAGSQKDENLAYYIENQFRDFKLSKVWRDEHYVKIQVKGSAAQNAVTIINVNGDSDLVENPGGYVAYSKATTVSGKLIHANFGTKKDFEDLKYPVNGSLVIVRAGKITFAEKVANAQSFNAIGVLIYMDQTKFPVVEAELSLFGHAHLGTGDPYTPGFPSFNHTQFPPSQSSGLPSIPVQTISRKAAEKLFQNMETNCPPSWNTDSLCKLESSQGINVNLSVNNVLKETRILNIFGVIKGFEEPDRYIVVGAQRDAWGPGAAKSSVGTGLLLKLAQAFSDMVSRGGFKPSRSIIFASWSAGDFGAVGATEWLEGYLSSLHLKAFTYINLDKVVLGTRNFKVSASPLLYTLIEKTMQDVRHPIDGKPLYRDSNWISKVEDLSLDNAAFPFLAYSGIPAVSFWFCENEDYPYLDTNLDTYEKLIQKVPQLNKMVRAAAEVAGQFIIKLTHDIELNLDYDMYNNKILSFVKELNQFRADIKAMGLSLQWLYSARGDFFRATSRLTTDFHNAEKTNRFVVREINNRIMKVEYHFLSPYVSPRESPFRHIFWGSGSHTLTALVENLKLRQKNSSAFNETLFRNQLALATWTIQGVANALSGDIWDIDNEF.

The Cytoplasmic segment spans residues 1 to 67; the sequence is MMDQARSAIS…KHRRLNGRLC (67 aa). The tract at residues 1–67 is mediates interaction with SH3BP4; sequence MMDQARSAIS…KHRRLNGRLC (67 aa). Phosphoserine is present on residues S10 and S19. Y20 bears the Phosphotyrosine mark. An Endocytosis signal motif is present at residues 20–23; it reads YTRF. Position 21 is a phosphothreonine (T21). At S24 the chain carries Phosphoserine. Positions 58–61 match the Stop-transfer sequence motif; sequence KHRR. C67 carries the S-palmitoyl cysteine lipid modification. The helical; Signal-anchor for type II membrane protein transmembrane segment at 68 to 88 threads the bilayer; sequence FGTIAVVIFFLIGFMIGYLGY. Residues 89-757 lie on the Extracellular side of the membrane; sequence CKRTEQKDCV…GDIWDIDNEF (669 aa). T103 carries an O-linked (GalNAc...) threonine glycan. The region spanning 220-310 is the PA domain; sequence SKATTVSGKL…GTGDPYTPGF (91 aa). 2 N-linked (GlcNAc...) asparagine glycosylation sites follow: N248 and N314. The tract at residues 566 to 757 is ligand-binding; sequence NLDTYEKLIQ…GDIWDIDNEF (192 aa). Residues 643-645 carry the Cell attachment site motif; the sequence is RGD. N-linked (GlcNAc...) asparagine glycosylation is found at N719 and N724.

Belongs to the peptidase M28 family. M28B subfamily. Homodimer; disulfide-linked. Binds one transferrin molecule per subunit. Interacts with SH3BP4. Interacts with STEAP3; facilitates TFRC endocytosis in erythroid precursor cells. In terms of processing, stearoylated by ZDHHC6 which inhibits TFRC-mediated activation of the JNK pathway and promotes mitochondrial fragmentation. Stearoylation does not affect iron uptake. N- and O-glycosylated, phosphorylated and palmitoylated.

Its subcellular location is the cell membrane. The protein localises to the melanosome. Functionally, cellular uptake of iron occurs via receptor-mediated endocytosis of ligand-occupied transferrin receptor into specialized endosomes. Endosomal acidification leads to iron release. The apotransferrin-receptor complex is then recycled to the cell surface with a return to neutral pH and the concomitant loss of affinity of apotransferrin for its receptor. Transferrin receptor is necessary for development of erythrocytes and the nervous system. Positively regulates T and B cell proliferation through iron uptake. Acts as a lipid sensor that regulates mitochondrial fusion by regulating activation of the JNK pathway. When dietary levels of stearate (C18:0) are low, promotes activation of the JNK pathway, resulting in HUWE1-mediated ubiquitination and subsequent degradation of the mitofusin MFN2 and inhibition of mitochondrial fusion. When dietary levels of stearate (C18:0) are high, TFRC stearoylation inhibits activation of the JNK pathway and thus degradation of the mitofusin MFN2. Mediates uptake of NICOL1 into fibroblasts where it may regulate extracellular matrix production. The polypeptide is Transferrin receptor protein 1 (TFRC) (Cricetulus griseus (Chinese hamster)).